The sequence spans 416 residues: CinA-like protein (416 aa).

This sequence belongs to the CinA family.

The protein is CinA-like protein of Rippkaea orientalis (strain PCC 8801 / RF-1) (Cyanothece sp. (strain PCC 8801)).